Consider the following 316-residue polypeptide: MATELSDAEKRKLLRERRQQKFSNGGASSRLNKITGQQQNSFLSSTSVLDEPKVTPSGNKKSSNVSDEEVEKSTKEIQDLLSSIPGNKDNSETDAAETNPEVALFQQLLKMQQQGGGFQNGSPDASTPDLFSSLLNNDTNTTASATQMLPNFVDEKVLKYYKFKVSKLKSYIILIKWALLAPYVYFIMHPNPTVLQASNLLSQIVERSNFFSIFTGLEIVFISIYYQMLKKLQRDNNVTATQNAGGILKYLTMIPEGILPIRNIQGKIGLALEYFDVASMYVTDICFVLVLFGVMKYYHSSFPISVPIEPPIAGIQ.

The interval 1–75 is disordered; sequence MATELSDAEK…SDEEVEKSTK (75 aa). At 1–167 the chain is on the cytoplasmic side; that stretch reads MATELSDAEK…LKYYKFKVSK (167 aa). The span at 7–19 shows a compositional bias: basic and acidic residues; it reads DAEKRKLLRERRQ. Composition is skewed to polar residues over residues 22–48 and 56–65; these read FSNG…STSV and PSGNKKSSNV. A helical membrane pass occupies residues 168–187; the sequence is LKSYIILIKWALLAPYVYFI. Topologically, residues 188 to 209 are lumenal; it reads MHPNPTVLQASNLLSQIVERSN. Residues 210–229 traverse the membrane as a helical segment; it reads FFSIFTGLEIVFISIYYQML. Residues 230-276 are Cytoplasmic-facing; it reads KKLQRDNNVTATQNAGGILKYLTMIPEGILPIRNIQGKIGLALEYFD. A helical transmembrane segment spans residues 277–297; the sequence is VASMYVTDICFVLVLFGVMKY. Residues 298–316 lie on the Lumenal side of the membrane; it reads YHSSFPISVPIEPPIAGIQ.

It belongs to the GET2 family. In terms of assembly, component of the Golgi to ER traffic (GET) complex, which is composed of GET1, GET2 and GET3. Within the complex, GET1 and GET2 form a heterotetramer which is stabilized by phosphatidylinositol binding and which binds to the GET3 homodimer.

It localises to the endoplasmic reticulum membrane. The protein resides in the golgi apparatus membrane. In terms of biological role, required for the post-translational delivery of tail-anchored (TA) proteins to the endoplasmic reticulum. Together with GET1, acts as a membrane receptor for soluble GET3, which recognizes and selectively binds the transmembrane domain of TA proteins in the cytosol. The GET complex cooperates with the HDEL receptor ERD2 to mediate the ATP-dependent retrieval of resident ER proteins that contain a C-terminal H-D-E-L retention signal from the Golgi to the ER. This chain is Golgi to ER traffic protein 2, found in Kluyveromyces lactis (strain ATCC 8585 / CBS 2359 / DSM 70799 / NBRC 1267 / NRRL Y-1140 / WM37) (Yeast).